We begin with the raw amino-acid sequence, 718 residues long: MTLEVVSDAAGRMRVKVDWVRCDSRRAVAVEEAVAKQNGVRVVHAYPRTGSVVVWYSPRRADRAAVLAAIKGAAHVAAELIPARAPHSAEIRNTDVLRMVIGGVALALLGVRRYVFARPPLLGTTGRTVATGVTIFTGYPFLRGALRSLRSGKAGTDALVSAATVASLILRENVVALTVLWLLNIGEYLQDLTLRRTRRAISELLRGNQDTAWVRLTDPSAGSDAATEIQVPIDTVQIGDEVVVHEHVAIPVDGEVVDGEAIVNQSAITGENLPVSVVVGTRVHAGSVVVRGRVVVRAHAVGNQTTIGRIISRVEEAQLDRAPIQTVGENFSRRFVPTSFIVSAIALLITGDVRRAMTMLLIACPCAVGLSTPTAISAAIGNGARRGILIKGGSHLEQAGRVDAIVFDKTGTLTVGRPVVTNIVAMHKDWEPEQVLAYAASSEIHSRHPLAEAVIRSTEERRISIPPHEECEVLVGLGMRTWADGRTLLLGSPSLLRAEKVRVSKKASEWVDKLRRQAETPLLLAVDGTLVGLISLRDEVRPEAAQVLTKLRANGIRRIVMLTGDHPEIAQVVADELGIDEWRAEVMPEDKLAAVRELQDDGYVVGMVGDGINDAPALAAADIGIAMGLAGTDVAVETADVALANDDLHRLLDVGDLGERAVDVIRQNYGMSIAVNAAGLLIGAGGALSPVLAAILHNASSVAVVANSSRLIRYRLDR.

Residues 11 to 78 (GRMRVKVDWV…AIKGAAHVAA (68 aa)) enclose the HMA domain. Helical transmembrane passes span 87–105 (HSAE…GGVA), 128–146 (TVAT…RGAL), 154–168 (AGTD…VASL), 177–191 (LTVL…YLQD), 327–351 (VGEN…LITG), and 357–375 (MTML…TPTA). The 4-aspartylphosphate intermediate role is filled by Asp408. Mg(2+) contacts are provided by Asp408, Thr410, and Asp610. Transmembrane regions (helical) follow at residues 661–680 (AVDV…AAGL) and 690–709 (PVLA…ANSS).

It belongs to the cation transport ATPase (P-type) (TC 3.A.3) family. Type IB subfamily.

It localises to the cell membrane. It catalyses the reaction Mn(2+)(in) + ATP + H2O = Mn(2+)(out) + ADP + phosphate + H(+). Functionally, high affinity, slow turnover Mn(2+) transporting ATPase. The polypeptide is Manganese-exporting P-type ATPase (ctpC) (Mycobacterium bovis (strain ATCC BAA-935 / AF2122/97)).